Reading from the N-terminus, the 681-residue chain is U3 small nucleolar ribonucleoprotein protein MPP10 (681 aa).

A phosphoserine mark is found at Ser-61, Ser-120, and Ser-139. Over residues 105–147 the composition is skewed to acidic residues; it reads SLLPESEEQEREEDGSEIEADDKEDLEDLEEEEVSDMGNDDPE. Disordered regions lie at residues 105-202 and 216-364; these read SLLP…IVDD and NIEK…EKRQ. A coiled-coil region spans residues 109–138; sequence ESEEQEREEDGSEIEADDKEDLEDLEEEEV. The span at 148 to 162 shows a compositional bias: basic and acidic residues; that stretch reads MGERAENSSKSDLRK. Phosphoserine occurs at positions 163, 167, and 171. The span at 180–190 shows a compositional bias: polar residues; the sequence is LEQQSKVQNKG. Basic and acidic residues-rich tracts occupy residues 193-202 and 216-226; these read KPREKSIVDD and NIEKEEERKDD. Residues 205–239 are a coiled coil; that stretch reads FKLSEMEAYLENIEKEEERKDDNDEEEEDIDFFED. The span at 227–247 shows a compositional bias: acidic residues; sequence NDEEEEDIDFFEDIDSDEDEG. A Phosphoserine modification is found at Ser-242. A compositionally biased stretch (basic residues) spans 253–264; sequence KKLKSGKSSRNL. A phosphoserine mark is found at Ser-275 and Ser-289. The span at 280-290 shows a compositional bias: basic and acidic residues; the sequence is TNVHDDELDSN. Coiled coils occupy residues 284 to 324 and 348 to 382; these read DDEL…NKQH and NVKK…LEKK. A compositionally biased stretch (acidic residues) spans 291–318; the sequence is KEDDEIAEEEAEELSISETDEDDDLQEN. The span at 319 to 329 shows a compositional bias: basic and acidic residues; the sequence is EDNKQHKESLK. A Glycyl lysine isopeptide (Lys-Gly) (interchain with G-Cter in SUMO2) cross-link involves residue Lys-350. Over residues 351-364 the composition is skewed to basic and acidic residues; it reads KNSDEVKSSFEKRQ. Glycyl lysine isopeptide (Lys-Gly) (interchain with G-Cter in SUMO2) cross-links involve residues Lys-382 and Lys-394. Positions 469–490 form a coiled coil; it reads LAEIYEQEYIKLNQQKTAEEEN. Lys-555 is covalently cross-linked (Glycyl lysine isopeptide (Lys-Gly) (interchain with G-Cter in SUMO2)). Residues 558–575 are compositionally biased toward basic and acidic residues; it reads NKAGDIKTAAEKTATDKK. The tract at residues 558–606 is disordered; the sequence is NKAGDIKTAAEKTATDKKRERRKKKYQKRMKIKEKEKRRKLLEKSSVDQ. The stretch at 574 to 604 forms a coiled coil; the sequence is KKRERRKKKYQKRMKIKEKEKRRKLLEKSSV. The segment covering 576–598 has biased composition (basic residues); sequence RERRKKKYQKRMKIKEKEKRRKL. The residue at position 609 (Lys-609) is an N6-acetyllysine. Glycyl lysine isopeptide (Lys-Gly) (interchain with G-Cter in SUMO2) cross-links involve residues Lys-632 and Lys-649. A coiled-coil region spans residues 648–670; the sequence is SKLQDQVKMQINDAKKTEKKKKK. Residues 660–681 form a disordered region; sequence DAKKTEKKKKKRQDISVHKLKL. The span at 672-681 shows a compositional bias: basic and acidic residues; the sequence is QDISVHKLKL.

It belongs to the MPP10 family. Part of the small subunit (SSU) processome, composed of more than 70 proteins and the RNA chaperone small nucleolar RNA (snoRNA) U3. Component of a heterotrimeric complex containing IMP3, IMP4 and MPHOSPH10. Interacts with IMP3 and IMP4. In terms of processing, phosphorylated in M (mitotic) phase.

It localises to the nucleus. Its subcellular location is the nucleolus. The protein localises to the chromosome. Functionally, component of the 60-80S U3 small nucleolar ribonucleoprotein (U3 snoRNP). Required for the early cleavages during pre-18S ribosomal RNA processing. Part of the small subunit (SSU) processome, first precursor of the small eukaryotic ribosomal subunit. During the assembly of the SSU processome in the nucleolus, many ribosome biogenesis factors, an RNA chaperone and ribosomal proteins associate with the nascent pre-rRNA and work in concert to generate RNA folding, modifications, rearrangements and cleavage as well as targeted degradation of pre-ribosomal RNA by the RNA exosome. The sequence is that of U3 small nucleolar ribonucleoprotein protein MPP10 from Homo sapiens (Human).